A 336-amino-acid polypeptide reads, in one-letter code: Glucokinase (336 aa).

13-18 (ADVGGT) lines the ATP pocket.

It belongs to the bacterial glucokinase family.

The protein resides in the cytoplasm. It carries out the reaction D-glucose + ATP = D-glucose 6-phosphate + ADP + H(+). The polypeptide is Glucokinase (Cupriavidus metallidurans (strain ATCC 43123 / DSM 2839 / NBRC 102507 / CH34) (Ralstonia metallidurans)).